The chain runs to 255 residues: Diphthine synthase (255 aa).

Residues leucine 9, aspartate 85, valine 88, 113–114 (SI), leucine 164, alanine 207, and histidine 232 each bind S-adenosyl-L-methionine.

Belongs to the diphthine synthase family. In terms of assembly, homodimer.

It carries out the reaction 2-[(3S)-amino-3-carboxypropyl]-L-histidyl-[translation elongation factor 2] + 3 S-adenosyl-L-methionine = diphthine-[translation elongation factor 2] + 3 S-adenosyl-L-homocysteine + 3 H(+). The protein operates within protein modification; peptidyl-diphthamide biosynthesis. Functionally, S-adenosyl-L-methionine-dependent methyltransferase that catalyzes the trimethylation of the amino group of the modified target histidine residue in translation elongation factor 2 (EF-2), to form an intermediate called diphthine. The three successive methylation reactions represent the second step of diphthamide biosynthesis. This Methanococcus vannielii (strain ATCC 35089 / DSM 1224 / JCM 13029 / OCM 148 / SB) protein is Diphthine synthase.